The following is a 221-amino-acid chain: Urease accessory protein UreE (221 aa).

Residues 160–194 (VPGTNKTTGDLAEEEQETERHEPHAHAIGEHHHEK) are disordered. The span at 177-194 (TERHEPHAHAIGEHHHEK) shows a compositional bias: basic and acidic residues.

Belongs to the UreE family.

It localises to the cytoplasm. In terms of biological role, involved in urease metallocenter assembly. Binds nickel. Probably functions as a nickel donor during metallocenter assembly. The chain is Urease accessory protein UreE from Bifidobacterium longum subsp. infantis (strain ATCC 15697 / DSM 20088 / JCM 1222 / NCTC 11817 / S12).